The following is a 90-amino-acid chain: MDVVRTLILCVCLFGLTFAVPCIDGVCTSNELQCASGYVKGCHAGLCTCEHATTQSCTVVNNCLHLGTCSLHGRDGFWHCVDSVCKCFFF.

An N-terminal signal peptide occupies residues 1–19 (MDVVRTLILCVCLFGLTFA).

Contains 6 disulfide bonds. As to expression, detected in hemolymph (at protein level). In oysters collected in the summer the expression level is highest in the digestive gland with low levels of expression in gill, mantle, labial palp, style-sac midgut, gonad, heart, and hemocyte. In winter expression levels are higher in all tissues with highest expression levels observed in the digestive gland. Within the digestive gland expression is limited to the basophil cells of the digestive diverticula.

The protein localises to the secreted. Slow-binding inhibitor of serine proteases. The inhibitor rapidly binds to the protease forming a weak enzyme-inhibitor complex, and this is followed by a slow isomerization forming a tight-binding enzyme-inhibitor complex. Active against subtilisin A, perkinsin and trypsin with dissociation constants of 0.29 nM, 13.7 nM and 17.7 nM respectively. Not active against thermolysin, papain or pepsin. Has antiparasitic activity against the protozoan P.marinus. This is Serine protease inhibitor Cvsi-1 from Crassostrea virginica (Eastern oyster).